A 315-amino-acid chain; its full sequence is tRNA dimethylallyltransferase (315 aa).

13–20 is an ATP binding site; the sequence is GPTASGKT. Residue 15-20 participates in substrate binding; it reads TASGKT. Interaction with substrate tRNA regions lie at residues 38-41, 162-166, 243-248, and 276-283; these read DSAL, QRLSR, RCVGYR, and KRQITWLR.

This sequence belongs to the IPP transferase family. As to quaternary structure, monomer. The cofactor is Mg(2+).

The catalysed reaction is adenosine(37) in tRNA + dimethylallyl diphosphate = N(6)-dimethylallyladenosine(37) in tRNA + diphosphate. Its function is as follows. Catalyzes the transfer of a dimethylallyl group onto the adenine at position 37 in tRNAs that read codons beginning with uridine, leading to the formation of N6-(dimethylallyl)adenosine (i(6)A). This Vibrio vulnificus (strain YJ016) protein is tRNA dimethylallyltransferase.